Reading from the N-terminus, the 116-residue chain is Chaperone protein SicP (116 aa).

The protein belongs to the SicP family.

The protein localises to the cytoplasm. Its function is as follows. Molecular chaperone required for SptP stabilization and secretion. This chain is Chaperone protein SicP (sicP), found in Salmonella paratyphi A (strain ATCC 9150 / SARB42).